Consider the following 101-residue polypeptide: Small ribosomal subunit protein uS14 (101 aa).

It belongs to the universal ribosomal protein uS14 family. As to quaternary structure, part of the 30S ribosomal subunit. Contacts proteins S3 and S10.

Binds 16S rRNA, required for the assembly of 30S particles and may also be responsible for determining the conformation of the 16S rRNA at the A site. In Pseudomonas putida (strain GB-1), this protein is Small ribosomal subunit protein uS14.